We begin with the raw amino-acid sequence, 167 residues long: Probable glutathione peroxidase 8 (167 aa).

Cys41 is an active-site residue.

Belongs to the glutathione peroxidase family.

The catalysed reaction is 2 glutathione + H2O2 = glutathione disulfide + 2 H2O. Its function is as follows. May constitute a glutathione peroxidase-like protective system against oxidative stresses. In Arabidopsis thaliana (Mouse-ear cress), this protein is Probable glutathione peroxidase 8 (GPX8).